The following is a 381-amino-acid chain: uncharacterized protein (381 aa).

A helical membrane pass occupies residues 3-23 (GAVAGLVFLAVLVIFAIIVVA).

Belongs to the band 7/mec-2 family.

It localises to the membrane. This is an uncharacterized protein from Mycobacterium bovis (strain ATCC BAA-935 / AF2122/97).